The chain runs to 454 residues: Ribosomal protein uS12 methylthiotransferase RimO (454 aa).

Residues 14-125 form the MTTase N-terminal domain; sequence SKVAFSHVGC…IAKVLDRVEK (112 aa). Positions 23, 59, 88, 163, 167, and 170 each coordinate [4Fe-4S] cluster. In terms of domain architecture, Radical SAM core spans 149 to 378; it reads DKNKFVAYLR…ISVQQNISKD (230 aa). The 72-residue stretch at 381–452 folds into the TRAM domain; the sequence is QSYVGSKMKI…EYDLYGETIK (72 aa).

This sequence belongs to the methylthiotransferase family. RimO subfamily. It depends on [4Fe-4S] cluster as a cofactor.

The protein localises to the cytoplasm. The catalysed reaction is L-aspartate(89)-[ribosomal protein uS12]-hydrogen + (sulfur carrier)-SH + AH2 + 2 S-adenosyl-L-methionine = 3-methylsulfanyl-L-aspartate(89)-[ribosomal protein uS12]-hydrogen + (sulfur carrier)-H + 5'-deoxyadenosine + L-methionine + A + S-adenosyl-L-homocysteine + 2 H(+). Catalyzes the methylthiolation of an aspartic acid residue of ribosomal protein uS12. The protein is Ribosomal protein uS12 methylthiotransferase RimO of Prochlorococcus marinus (strain MIT 9312).